A 154-amino-acid polypeptide reads, in one-letter code: MMNRVIVGAMGLLAAGAVVVGCSNDKPAGAAQVSSGSNAEVKVDGKDLAGLDLKSVTCVKQGGNINVASAAINGQQGLGVVMTDEATPKVTSLGLVYDGAALAVSEGMGAKVGSADVKVDGKTYTITGEASGADVKNPMAGMITKPFTIKVSCG.

Residues Met1–Gly21 form the signal peptide. A lipid anchor (N-palmitoyl cysteine) is attached at Cys22. The S-diacylglycerol cysteine moiety is linked to residue Cys22.

Belongs to the mycobacterial 19 kDa antigen family.

It localises to the cell membrane. This is Putative lipoprotein MAB_4074c from Mycobacteroides abscessus (strain ATCC 19977 / DSM 44196 / CCUG 20993 / CIP 104536 / JCM 13569 / NCTC 13031 / TMC 1543 / L948) (Mycobacterium abscessus).